A 339-amino-acid polypeptide reads, in one-letter code: Dihydroorotate dehydrogenase (quinone) (339 aa).

FMN-binding positions include 62 to 66 (AGLDK) and T86. A substrate-binding site is contributed by K66. Residue 111–115 (NRMGF) participates in substrate binding. Residues N139 and N172 each coordinate FMN. Residue N172 participates in substrate binding. S175 acts as the Nucleophile in catalysis. N177 contacts substrate. The FMN site is built by K217 and T245. 246 to 247 (NT) serves as a coordination point for substrate. Residues G268, G297, and 318-319 (YS) each bind FMN.

This sequence belongs to the dihydroorotate dehydrogenase family. Type 2 subfamily. Monomer. The cofactor is FMN.

The protein localises to the cell membrane. The catalysed reaction is (S)-dihydroorotate + a quinone = orotate + a quinol. Its pathway is pyrimidine metabolism; UMP biosynthesis via de novo pathway; orotate from (S)-dihydroorotate (quinone route): step 1/1. Catalyzes the conversion of dihydroorotate to orotate with quinone as electron acceptor. The polypeptide is Dihydroorotate dehydrogenase (quinone) (Shewanella denitrificans (strain OS217 / ATCC BAA-1090 / DSM 15013)).